The primary structure comprises 324 residues: Phospho-N-acetylmuramoyl-pentapeptide-transferase (324 aa).

10 consecutive transmembrane segments (helical) span residues 5–25, 52–72, 76–96, 117–137, 147–167, 176–196, 203–223, 227–247, 250–270, and 302–322; these read IIVI…PLFI, PTMG…WVTA, VLSA…VLGF, FIGQ…SGFS, WSFD…VGGS, LDGL…VLAW, VAVF…FNAH, VFMG…VAVL, LELL…SVII, and IVVT…YIEV.

This sequence belongs to the glycosyltransferase 4 family. MraY subfamily. It depends on Mg(2+) as a cofactor.

The protein localises to the cell membrane. The enzyme catalyses UDP-N-acetyl-alpha-D-muramoyl-L-alanyl-gamma-D-glutamyl-meso-2,6-diaminopimeloyl-D-alanyl-D-alanine + di-trans,octa-cis-undecaprenyl phosphate = di-trans,octa-cis-undecaprenyl diphospho-N-acetyl-alpha-D-muramoyl-L-alanyl-D-glutamyl-meso-2,6-diaminopimeloyl-D-alanyl-D-alanine + UMP. Its pathway is cell wall biogenesis; peptidoglycan biosynthesis. Functionally, catalyzes the initial step of the lipid cycle reactions in the biosynthesis of the cell wall peptidoglycan: transfers peptidoglycan precursor phospho-MurNAc-pentapeptide from UDP-MurNAc-pentapeptide onto the lipid carrier undecaprenyl phosphate, yielding undecaprenyl-pyrophosphoryl-MurNAc-pentapeptide, known as lipid I. In Geobacillus thermodenitrificans (strain NG80-2), this protein is Phospho-N-acetylmuramoyl-pentapeptide-transferase.